We begin with the raw amino-acid sequence, 346 residues long: Isopentenyl-diphosphate delta-isomerase (346 aa).

9–10 lines the substrate pocket; the sequence is RK. Residues Ser67, 68–70, Ser98, and Asn127 contribute to the FMN site; that span reads SMT. 98-100 is a binding site for substrate; that stretch reads SQR. A substrate-binding site is contributed by Gln162. A Mg(2+)-binding site is contributed by Glu163. Residues Lys194, Thr224, 274 to 276, and 295 to 296 contribute to the FMN site; these read GIR and AA.

This sequence belongs to the IPP isomerase type 2 family. Homooctamer. Dimer of tetramers. Requires FMN as cofactor. NADPH is required as a cofactor. The cofactor is Mg(2+).

It localises to the cytoplasm. The enzyme catalyses isopentenyl diphosphate = dimethylallyl diphosphate. Functionally, involved in the biosynthesis of isoprenoids. Catalyzes the 1,3-allylic rearrangement of the homoallylic substrate isopentenyl (IPP) to its allylic isomer, dimethylallyl diphosphate (DMAPP). The sequence is that of Isopentenyl-diphosphate delta-isomerase from Stutzerimonas stutzeri (strain A1501) (Pseudomonas stutzeri).